Reading from the N-terminus, the 155-residue chain is Small ribosomal subunit protein uS7cz/uS7cy (155 aa).

This sequence belongs to the universal ribosomal protein uS7 family. In terms of assembly, part of the 30S ribosomal subunit.

It is found in the plastid. The protein localises to the chloroplast. One of the primary rRNA binding proteins, it binds directly to 16S rRNA where it nucleates assembly of the head domain of the 30S subunit. This chain is Small ribosomal subunit protein uS7cz/uS7cy (rps7-A), found in Drimys granadensis.